Here is a 299-residue protein sequence, read N- to C-terminus: Protease HtpX homolog (299 aa).

The next 2 helical transmembrane spans lie at 15–35 (ILLL…GYLF) and 39–59 (GLGG…SMIF). Histidine 143 provides a ligand contact to Zn(2+). Glutamate 144 is a catalytic residue. Histidine 147 provides a ligand contact to Zn(2+). 2 helical membrane passes run 158-178 (IAVA…RMMW) and 198-218 (IIML…ATLV). Residue glutamate 227 participates in Zn(2+) binding.

Belongs to the peptidase M48B family. Zn(2+) is required as a cofactor.

It localises to the cell membrane. The sequence is that of Protease HtpX homolog from Streptococcus pneumoniae (strain Hungary19A-6).